A 373-amino-acid chain; its full sequence is MATSASSHLNKGIKQVYMALPQGDKVQAMYIWIDGTGEGLRCKTRTLDSEPKCIEELPEWNFDGSSTFQSEGSNSDMYLVPAAMFRDPFRKDPNKLVFCEVFKYNRKPAETNLRHTCKRIMDMVSNQRPWFGMEQEYTLMGTDGHPFGWPSNGFPGPQGPYYCGVGADKAYGRDIVEAHYRACLYAGIKIGGTNAEVMPAQWEFQIGPCEGIDMGDHLWVARFILHRVCEDFGVIATFDPKPIPGNWNGAGCHTNFSTKAMREENGLKYIEEAIEKLSKRHQYHIRAYDPKGGLDNARRLTGFHETSNINDFSAGVANRGASIRIPRTVGQEKKGYFEDRRPSANCDPFAVTEALIRTCLLNETGDEPFQYKN.

Ala-2 is subject to N-acetylalanine. The tract at residues 2–25 (ATSASSHLNKGIKQVYMALPQGDK) is required for glutamine-induced ubiquitination by CRL4(CRBN) and proteasomal degradation. 2 positions are modified to N6-acetyllysine: Lys-11 and Lys-14. A GS beta-grasp domain is found at 26-106 (VQAMYIWIDG…VFCEVFKYNR (81 aa)). Tyr-104 carries the post-translational modification Phosphotyrosine. Positions 113–373 (LRHTCKRIMD…TGDEPFQYKN (261 aa)) constitute a GS catalytic domain. Glu-134 contacts ATP. Glu-134, Glu-136, Glu-196, and Glu-203 together coordinate Mn(2+). 203 to 208 (EFQIGP) contacts ATP. Residue 246–247 (NW) participates in L-glutamate binding. His-253 provides a ligand contact to Mn(2+). ATP is bound by residues 255–257 (NFS), Arg-319, and Arg-324. L-glutamate is bound at residue Arg-319. 336–338 (YFE) is a binding site for ADP. Glu-338 is a binding site for Mn(2+). Residue Arg-340 participates in L-glutamate binding. Position 343 is a phosphoserine (Ser-343).

Belongs to the glutamine synthetase family. Decamer; composed of two pentamers. Interacts with PALMD. Interacts with RHOJ. Interacts with BEST2; this interaction tethers a fraction of GLUL to the membrane, causing a decrease of cytosolic glutamine synthase (GS) activity and inhibits the chloride channel activity of BEST2 by affecting the gating at the aperture in the absence of intracellular glutamate. Requires Mg(2+) as cofactor. Mn(2+) serves as cofactor. Palmitoylated; undergoes autopalmitoylation. Post-translationally, acetylated by EP300/p300; acetylation is stimulated by increased glutamine levels and promotes ubiquitin-mediated proteasomal degradation. In terms of processing, ubiquitinated by ZNRF1. Ubiquitinated by the DCX (DDB1-CUL4-X-box) E3 ubiquitin-protein ligase complex called CRL4(CRBN), leading to proteasomal degradation.

The protein localises to the cytoplasm. The protein resides in the cytosol. It is found in the microsome. It localises to the mitochondrion. Its subcellular location is the cell membrane. It carries out the reaction L-glutamate + NH4(+) + ATP = L-glutamine + ADP + phosphate + H(+). The enzyme catalyses L-cysteinyl-[protein] + hexadecanoyl-CoA = S-hexadecanoyl-L-cysteinyl-[protein] + CoA. Glutamine synthetase activity is inhibited by methionine sulfoximine (MSO). Its function is as follows. Glutamine synthetase that catalyzes the ATP-dependent conversion of glutamate and ammonia to glutamine. Its role depends on tissue localization: in the brain, it regulates the levels of toxic ammonia and converts neurotoxic glutamate to harmless glutamine, whereas in the liver, it is one of the enzymes responsible for the removal of ammonia. Plays a key role in ammonium detoxification during erythropoiesis: the glutamine synthetase activity is required to remove ammonium generated by porphobilinogen deaminase (HMBS) during heme biosynthesis to prevent ammonium accumulation and oxidative stress. Essential for proliferation of fetal skin fibroblasts. Independently of its glutamine synthetase activity, required for endothelial cell migration during vascular development. Involved in angiogenesis by regulating membrane localization and activation of the GTPase RHOJ, possibly by promoting RHOJ palmitoylation. May act as a palmitoyltransferase for RHOJ: able to autopalmitoylate and then transfer the palmitoyl group to RHOJ. Plays a role in ribosomal 40S subunit biogenesis. Through the interaction with BEST2, inhibits BEST2 channel activity by affecting the gating at the aperture in the absence of intracellular L-glutamate, but sensitizes BEST2 to intracellular L-glutamate, which promotes the opening of BEST2 and thus relieves its inhibitory effect on BEST2. The chain is Glutamine synthetase from Bos taurus (Bovine).